A 362-amino-acid chain; its full sequence is H-2 class I histocompatibility antigen, L-D alpha chain (362 aa).

The first 24 residues, 1 to 24 (MGAMAPRTLLLLLAAALAPTQTRA), serve as a signal peptide directing secretion. The segment at 25-114 (GPHSMRYFET…LLGYYNQSAG (90 aa)) is alpha-1. The Extracellular portion of the chain corresponds to 25 to 309 (GPHSMRYFET…PPPSTDSYMV (285 aa)). Asparagine 110 is a glycosylation site (N-linked (GlcNAc...) asparagine). An alpha-2 region spans residues 115 to 206 (GTHTLQWMYG…KNGNATLLRT (92 aa)). A disulfide bond links cysteine 125 and cysteine 188. 2 N-linked (GlcNAc...) asparagine glycosylation sites follow: asparagine 200 and asparagine 280. An alpha-3 region spans residues 207-298 (DSPKAHVTHH…GLPEPLTLRW (92 aa)). The region spanning 209-297 (PKAHVTHHPR…EGLPEPLTLR (89 aa)) is the Ig-like C1-type domain. Cysteine 227 and cysteine 283 are joined by a disulfide. The segment at 299 to 309 (EPPPSTDSYMV) is connecting peptide. Residues 310–331 (IVAVLGVLGAMAIIGAVVAFVM) form a helical membrane-spanning segment. Over 332–362 (KRRRNTGGKGGDYALAPGSQSSEMSLRDCKA) the chain is Cytoplasmic. The disordered stretch occupies residues 340-362 (KGGDYALAPGSQSSEMSLRDCKA). A phosphoserine mark is found at serine 353 and serine 356.

The protein belongs to the MHC class I family. In terms of assembly, heterodimer of an alpha chain and a beta chain (beta-2-microglobulin).

It localises to the membrane. Functionally, involved in the presentation of foreign antigens to the immune system. In Mus musculus (Mouse), this protein is H-2 class I histocompatibility antigen, L-D alpha chain (H2-L).